The following is a 331-amino-acid chain: NADH-quinone oxidoreductase subunit H (331 aa).

8 helical membrane-spanning segments follow: residues 13–33, 80–100, 113–133, 159–179, 183–203, 249–269, 273–293, and 311–331; these read FLISSATVIFLVLNIAAVLTL, WVFLAAPIAMFLPAAAVWLVI, IGLVYFFAITSIGALGVIMAG, LILSLLGVAMLTGSLSMVDIV, AGGFWNWIIWPQLPMFLAFFV, VMSAVASTLFLGGWQPPLPFL, VFNWLWLGIKTTLLIFVFQWI, and KILVPVTILWLFVTAGAMLVI.

The protein belongs to the complex I subunit 1 family. In terms of assembly, NDH-1 is composed of 14 different subunits. Subunits NuoA, H, J, K, L, M, N constitute the membrane sector of the complex.

The protein resides in the cell membrane. The catalysed reaction is a quinone + NADH + 5 H(+)(in) = a quinol + NAD(+) + 4 H(+)(out). NDH-1 shuttles electrons from NADH, via FMN and iron-sulfur (Fe-S) centers, to quinones in the respiratory chain. The immediate electron acceptor for the enzyme in this species is believed to be ubiquinone. Couples the redox reaction to proton translocation (for every two electrons transferred, four hydrogen ions are translocated across the cytoplasmic membrane), and thus conserves the redox energy in a proton gradient. This subunit may bind ubiquinone. The chain is NADH-quinone oxidoreductase subunit H from Rubrobacter xylanophilus (strain DSM 9941 / JCM 11954 / NBRC 16129 / PRD-1).